The sequence spans 377 residues: Caspase-4 (377 aa).

Residues 1 to 59 (MAEDKHNKNPLKMLESLGKELISGLLDDFVEKNVLKLEEEEKKKIYDAKLQDKARVLVD) are required for LPS-binding. Residues 1–80 (MAEDKHNKNP…VFVQTFLNID (80 aa)) constitute a propeptide that is removed on maturation. Residues 1–91 (MAEDKHNKNP…NSTSIKAPEE (91 aa)) form the CARD domain. The residue at position 83 (Ser83) is a Phosphoserine. Residues His210 and Cys258 contribute to the active site. The propeptide occupies 271–289 (SPPALADSFSQSSENLEED).

It belongs to the peptidase C14A family. Heterotetramer that consists of two anti-parallel arranged heterodimers, each one formed by a 20 kDa (Caspase-4 subunit p20) and a 10 kDa (Caspase-4 subunit p10) subunit. Upon direct LPS-binding, forms large homooligomers, resulting in its activation. These oligomers are often referred to as 'non-canonical inflammasomes'. In its precursor form, interacts with TMEM214; this interaction is required for association with the endoplasmic reticulum membrane. Interacts with CASP1. Interacts with NOD2. Interacts with Serpinb1a, Serpinb1b and Serpinb1c; these interactions regulate CASP4 activity. In terms of assembly, heterotetramer that consists of two anti-parallel arranged heterodimers, each one formed by a 20 kDa (Caspase-4 subunit p20) and a 10 kDa (Caspase-4 subunit p10) subunit. Post-translationally, in response to activation signals, undergoes autoproteolytic cleavage and activation.

The protein resides in the cytoplasm. It is found in the cytosol. The protein localises to the endoplasmic reticulum membrane. It localises to the mitochondrion. Its subcellular location is the inflammasome. The protein resides in the secreted. The enzyme catalyses Strict requirement for Asp at the P1 position. It has a preferred cleavage sequence of Tyr-Val-Ala-Asp-|- but also cleaves at Asp-Glu-Val-Asp-|-.. Activated by homooligomerization induced by direct binding to cytosolic LPS, in a TLR4-independent manner. In addition to LPS, CASP4/CASP11 may also be activated by oxidized phospholipid 1-palmitoyl-2-arachidonoyl- sn-glycero-3-phosphorylcholine, an oxidized phospholipid (oxPAPC), in dendritic cells, promoting adaptive immunity. The role of oxPAPC is however unclear and another report suggests that oxPAPC competes with LPS-binding and inhibits the non-canonical inflammasome in macrophages. Inflammatory caspase that acts as the effector of the non-canonical inflammasome by mediating lipopolysaccharide (LPS)-induced pyroptosis. Also indirectly activates the NLRP3 and NLRP6 inflammasomes. Acts as a thiol protease that cleaves a tetrapeptide after an Asp residue at position P1: catalyzes cleavage of CGAS, GSDMD and IL18. Effector of the non-canonical inflammasome independently of NLRP3 inflammasome and CASP1: the non-canonical inflammasome promotes pyroptosis through GSDMD cleavage without involving secretion of cytokine IL1B. In the non-canonical inflammasome, CASP4 is activated by direct binding to the lipid A moiety of LPS without the need of an upstream sensor. LPS-binding promotes CASP4 activation and CASP4-mediated cleavage of GSDMD and IL18, followed by IL18 secretion through the GSDMD pore, pyroptosis of infected cells and their extrusion into the gut lumen. Also indirectly promotes secretion of mature cytokines (IL1A and HMGB1) downstream of GSDMD-mediated pyroptosis via activation of the NLRP3 and NLRP6 inflammasomes. Involved in NLRP3-dependent CASP1 activation and IL1B secretion in response to non-canonical activators, such as UVB radiation or cholera enterotoxin. Involved in NLRP6 inflammasome-dependent activation in response to lipoteichoic acid (LTA), a cell-wall component of Gram-positive bacteria, which leads to CASP1 activation and IL1B secretion. Involved in LPS-induced IL6 secretion; this activity may not require caspase enzymatic activity. The non-canonical inflammasome is required for innate immunity to cytosolic, but not vacuolar, bacteria. Plays a crucial role in the restriction of S.typhimurium replication in colonic epithelial cells during infection. Pyroptosis limits bacterial replication, while cytokine secretion promotes the recruitment and activation of immune cells and triggers mucosal inflammation. May also act as an activator of adaptive immunity in dendritic cells, following activation by oxidized phospholipid 1-palmitoyl-2-arachidonoyl- sn-glycero-3-phosphorylcholine, an oxidized phospholipid (oxPAPC). Cleavage of GSDMD is not strictly dependent on the consensus cleavage site but depends on an exosite interface on CASP4 that recognizes and binds the Gasdermin-D, C-terminal (GSDMD-CT) part. Catalyzes cleavage and maturation of IL18; IL18 processing also depends of the exosite interface on CASP4. In contrast, it does not directly process IL1B. During non-canonical inflammasome activation, cuts CGAS and may play a role in the regulation of antiviral innate immune activation. This chain is Caspase-4 (CASP4), found in Bos taurus (Bovine).